Reading from the N-terminus, the 469-residue chain is tRNA modification GTPase MnmE (469 aa).

Residues R38, E95, and R134 each coordinate (6S)-5-formyl-5,6,7,8-tetrahydrofolate. Positions 230–392 (GIRVALVGPP…LRRGLAALVD (163 aa)) constitute a TrmE-type G domain. GTP contacts are provided by residues 240–245 (NAGKSS), 259–265 (SAQAGTT), and 284–287 (DTAG). Mg(2+) is bound by residues S244 and T265. K468 provides a ligand contact to (6S)-5-formyl-5,6,7,8-tetrahydrofolate.

This sequence belongs to the TRAFAC class TrmE-Era-EngA-EngB-Septin-like GTPase superfamily. TrmE GTPase family. In terms of assembly, homodimer. Heterotetramer of two MnmE and two MnmG subunits. K(+) serves as cofactor.

Its subcellular location is the cytoplasm. Its function is as follows. Exhibits a very high intrinsic GTPase hydrolysis rate. Involved in the addition of a carboxymethylaminomethyl (cmnm) group at the wobble position (U34) of certain tRNAs, forming tRNA-cmnm(5)s(2)U34. The polypeptide is tRNA modification GTPase MnmE (Halorhodospira halophila (strain DSM 244 / SL1) (Ectothiorhodospira halophila (strain DSM 244 / SL1))).